The sequence spans 346 residues: fMet-Leu-Phe receptor (346 aa).

2 N-linked (GlcNAc...) asparagine glycosylation sites follow: Asn-1 and Asn-7. Residues 1 to 24 (NSSLPTNISGGTPAVSAGYLFLDI) are Extracellular-facing. Residues 25–47 (ITYLVFAVTFVLGVLGNGLVIWV) traverse the membrane as a helical segment. The Cytoplasmic segment spans residues 48-58 (AGFRMTHTVTT). A helical membrane pass occupies residues 59 to 80 (ISYLNLAVADFCFTSTLPFFMV). The Extracellular portion of the chain corresponds to 81–97 (RKAMGGHWPFGWFLCKF). A disulfide bridge connects residues Cys-95 and Cys-173. The chain crosses the membrane as a helical span at residues 98 to 118 (IFTIVDINLFGSVFLIALIAL). The Cytoplasmic segment spans residues 119 to 137 (DRCVCVLHPVWTQNHRTVS). A helical membrane pass occupies residues 138–159 (LAKKVIIGPWVMALLLTLPVII). At 160-202 (RVTTVPGKTGTVACTFNFSPWTNDPKERINVAIAMLTVRGIIR) the chain is on the extracellular side. The helical transmembrane segment at 203-223 (FIIGFSAPMSIVAVSYGLIAT) threads the bilayer. Residues 224–239 (KIHKQGLIKFSRPLRV) are Cytoplasmic-facing. The chain crosses the membrane as a helical span at residues 240-263 (LSFVAAAFFLCWSPYQVVALIATV). At 264-282 (RIRELLQGMYKEIGIAVDV) the chain is on the extracellular side. A helical transmembrane segment spans residues 283–302 (TSALAFFNSCLNPMLYVFMG). Residues 303-346 (QDFRERLIHALPASLERALTEDSTQTSDTATNSTLPSAEVALQA) are Cytoplasmic-facing. The disordered stretch occupies residues 322-346 (TEDSTQTSDTATNSTLPSAEVALQA). A compositionally biased stretch (polar residues) spans 323–338 (EDSTQTSDTATNSTLP).

Belongs to the G-protein coupled receptor 1 family. In terms of processing, phosphorylated; which is necessary for desensitization.

It localises to the cell membrane. Its function is as follows. High affinity receptor for N-formyl-methionyl peptides (fMLP), which are powerful neutrophil chemotactic factors. Binding of fMLP to the receptor stimulates intracellular calcium mobilization and superoxide anion release. This response is mediated via a G-protein that activates a phosphatidylinositol-calcium second messenger system. Receptor for TAFA4, mediates its effects on chemoattracting macrophages, promoting phagocytosis and increasing ROS release. Receptor for cathepsin CTSG, leading to increased phagocyte chemotaxis. This is fMet-Leu-Phe receptor (FPR1) from Pan troglodytes (Chimpanzee).